A 293-amino-acid chain; its full sequence is Iron-sulfur cluster transfer protein Nubpl (293 aa).

Residues 214–217 (CQNC) form a CXXC motif probably involved in coordinating iron-sulfur cluster binding region.

This sequence belongs to the Mrp/NBP35 ATP-binding proteins family. As to quaternary structure, homodimer; dimerization is not reliant on iron-sulfur cluster binding. [4Fe-4S] cluster is required as a cofactor.

It is found in the mitochondrion membrane. Iron-sulfur cluster transfer protein involved in the assembly of the mitochondrial membrane respiratory chain NADH dehydrogenase (Complex I). May deliver one or more Fe-S clusters to complex I subunits. Alleviates pausing in mitochondrial DNA (mtDNA) replication at slow zone 2. May be involved in mtDNA-helicase-mediated mtDNA unwinding and replication by transferring iron-sulfur clusters. The protein is Iron-sulfur cluster transfer protein Nubpl of Drosophila melanogaster (Fruit fly).